Consider the following 573-residue polypeptide: Maestro heat-like repeat-containing protein family member 9 (573 aa).

5 HEAT repeats span residues 118 to 155, 252 to 289, 292 to 328, 357 to 394, and 418 to 458; these read LYKL…FTVT, PLLT…FHAE, TMVS…TSPK, SVAP…ITNL, and QYFP…LLNC.

In Homo sapiens (Human), this protein is Maestro heat-like repeat-containing protein family member 9 (MROH9).